We begin with the raw amino-acid sequence, 59 residues long: Large ribosomal subunit protein uL30 (59 aa).

It belongs to the universal ribosomal protein uL30 family. In terms of assembly, part of the 50S ribosomal subunit.

The protein is Large ribosomal subunit protein uL30 of Clostridium beijerinckii (strain ATCC 51743 / NCIMB 8052) (Clostridium acetobutylicum).